The sequence spans 225 residues: MAEGETESPGPKKCGPYISSVTSQSVNLMIRGVVLFFIGVFLALVLNLLQIQRNVTLFPPDVIASIFSSAWWVPPCCGTASAVIGLLYPCIDRHLGEPHKFKREWSSVMRCVAVFVGINHASAKVDFDNNIQLSLTLAALSIGLWWTFDRSRSGFGLGVGIAFLATVVTQLLVYNGVYQYTSPDFLYVRSWLPCIFFAGGITMGNIGRQLAMYECKVIAEKSHQE.

At 1–28 the chain is on the cytoplasmic side; it reads MAEGETESPGPKKCGPYISSVTSQSVNL. Residues 29 to 51 form a helical membrane-spanning segment; the sequence is MIRGVVLFFIGVFLALVLNLLQI. Topologically, residues 52–70 are lumenal; the sequence is QRNVTLFPPDVIASIFSSA. A helical membrane pass occupies residues 71–88; the sequence is WWVPPCCGTASAVIGLLY. Over 89-103 the chain is Cytoplasmic; that stretch reads PCIDRHLGEPHKFKR. A helical membrane pass occupies residues 104 to 126; it reads EWSSVMRCVAVFVGINHASAKVD. The Lumenal portion of the chain corresponds to 127–129; the sequence is FDN. The helical transmembrane segment at 130 to 148 threads the bilayer; that stretch reads NIQLSLTLAALSIGLWWTF. Residues 149 to 153 lie on the Cytoplasmic side of the membrane; it reads DRSRS. At Ser-151 the chain carries Phosphoserine; by PCK1. A helical transmembrane segment spans residues 154-175; the sequence is GFGLGVGIAFLATVVTQLLVYN. At 176 to 189 the chain is on the lumenal side; the sequence is GVYQYTSPDFLYVR. The chain crosses the membrane as a helical span at residues 190–207; sequence SWLPCIFFAGGITMGNIG. The Cytoplasmic portion of the chain corresponds to 208–225; it reads RQLAMYECKVIAEKSHQE. Cysteine sulfenic acid (-SOH); alternate is present on Cys-215. Cys-215 is covalently cross-linked (Glycyl cysteine thioester (Cys-Gly) (interchain with G-Cter in ubiquitin); alternate). The short motif at 219–225 is the KxHxx element; the sequence is AEKSHQE.

The protein belongs to the INSIG family. Interacts with SCAP; interaction is direct and only takes place in the presence of sterols; it prevents interaction between SCAP and the coat protein complex II (COPII). Associates with the SCAP-SREBP complex (composed of SCAP and SREBF1/SREBP1 or SREBF2/SREBP2); association is mediated via its interaction with SCAP and only takes place in the presence of sterols. Interacts with RNF139. Interacts with RNF145. Phosphorylation at Ser-151 by PCK1 reduces binding to oxysterol, disrupting the interaction between INSIG2 and SCAP, thereby promoting nuclear translocation of SREBP proteins (SREBF1/SREBP1 or SREBF2/SREBP2) and subsequent transcription of downstream lipogenesis-related genes. In terms of processing, polyubiquitinated by AMFR/gp78 at Cys-215 in some tissues such as adipose tissues, undifferentiated myoblasts and liver, leading to its degradation. In differentiated myotubes, Cys-215 oxidation prevents ubiquitination at the same site, resulting in protein stabilization. Post-translationally, oxidized at Cys-215 in differentiated myotubes, preventing ubiquitination at the same site, and resulting in protein stabilization.

The protein localises to the endoplasmic reticulum membrane. In terms of biological role, oxysterol-binding protein that mediates feedback control of cholesterol synthesis by controlling both endoplasmic reticulum to Golgi transport of SCAP and degradation of HMGCR. Acts as a negative regulator of cholesterol biosynthesis by mediating the retention of the SCAP-SREBP complex in the endoplasmic reticulum, thereby blocking the processing of sterol regulatory element-binding proteins (SREBPs) SREBF1/SREBP1 and SREBF2/SREBP2. Binds oxysterol, including 22-hydroxycholesterol, 24-hydroxycholesterol, 25-hydroxycholesterol and 27-hydroxycholesterol, regulating interaction with SCAP and retention of the SCAP-SREBP complex in the endoplasmic reticulum. In presence of oxysterol, interacts with SCAP, retaining the SCAP-SREBP complex in the endoplasmic reticulum, thereby preventing SCAP from escorting SREBF1/SREBP1 and SREBF2/SREBP2 to the Golgi. Sterol deprivation or phosphorylation by PCK1 reduce oxysterol-binding, disrupting the interaction between INSIG2 and SCAP, thereby promoting Golgi transport of the SCAP-SREBP complex, followed by processing and nuclear translocation of SREBF1/SREBP1 and SREBF2/SREBP2. Also regulates cholesterol synthesis by regulating degradation of HMGCR: initiates the sterol-mediated ubiquitin-mediated endoplasmic reticulum-associated degradation (ERAD) of HMGCR via recruitment of the reductase to the ubiquitin ligase RNF139. In Homo sapiens (Human), this protein is Insulin-induced gene 2 protein.